A 601-amino-acid chain; its full sequence is DNA replication licensing factor MCM3 (601 aa).

The MCM domain maps to 180 to 386 (PINLLSKSIA…LDRRLSQHVL (207 aa)). Residue 229–236 (GDPSTAKS) participates in ATP binding. Positions 361–364 (SRFD) match the Arginine finger motif.

Belongs to the MCM family. In terms of assembly, component of the MCM2-7 complex.

The protein localises to the nucleus. The protein resides in the chromosome. Its subcellular location is the nucleoplasm. It carries out the reaction ATP + H2O = ADP + phosphate + H(+). In terms of biological role, acts as a component of the MCM2-7 complex (MCM complex) which is the replicative helicase essential for DNA replication initiation and elongation in eukaryotic cells. Required for DNA replication and cell proliferation. The active ATPase sites in the MCM2-7 ring are formed through the interaction surfaces of two neighboring subunits such that a critical structure of a conserved arginine finger motif is provided in trans relative to the ATP-binding site of the Walker A box of the adjacent subunit. The sequence is that of DNA replication licensing factor MCM3 from Entamoeba histolytica (strain ATCC 30459 / HM-1:IMSS / ABRM).